Reading from the N-terminus, the 644-residue chain is Core protein VP4 (644 aa).

Belongs to the orbivirus VP4 family.

It is found in the virion. In terms of biological role, the VP4 protein is one of the five proteins (with VP1, VP3, VP6 and VP7) which form the inner capsid of the virus. This chain is Core protein VP4 (Segment-4), found in Bluetongue virus 11 (isolate USA) (BTV 11).